We begin with the raw amino-acid sequence, 549 residues long: Glucose-6-phosphate isomerase (549 aa).

Glu-355 acts as the Proton donor in catalysis. Catalysis depends on residues His-386 and Lys-514.

Belongs to the GPI family.

The protein localises to the cytoplasm. It carries out the reaction alpha-D-glucose 6-phosphate = beta-D-fructose 6-phosphate. It functions in the pathway carbohydrate biosynthesis; gluconeogenesis. The protein operates within carbohydrate degradation; glycolysis; D-glyceraldehyde 3-phosphate and glycerone phosphate from D-glucose: step 2/4. Catalyzes the reversible isomerization of glucose-6-phosphate to fructose-6-phosphate. The sequence is that of Glucose-6-phosphate isomerase from Salmonella schwarzengrund (strain CVM19633).